Consider the following 147-residue polypeptide: Hemoglobin subunit beta (147 aa).

The region spanning 3–147 (NWTKTEKATI…VMSALGKQYH (145 aa)) is the Globin domain. 2 residues coordinate heme b: His64 and His93.

This sequence belongs to the globin family. As to quaternary structure, heterotetramer of two alpha chains and two beta chains. As to expression, red blood cells.

Its function is as follows. Involved in oxygen transport from gills to the various peripheral tissues. The protein is Hemoglobin subunit beta (hbb) of Gymnodraco acuticeps (Antarctic dragonfish).